The chain runs to 173 residues: HTH-type transcriptional regulator IscR (173 aa).

The region spanning 2–131 (KLTSKGRYAV…NDITLGELMK (130 aa)) is the HTH rrf2-type domain. The segment at residues 28–51 (LADISERQGISLSYLEQLFSKLRK) is a DNA-binding region (H-T-H motif). Residues C92, C98, and C104 each contribute to the [2Fe-2S] cluster site.

It depends on [2Fe-2S] cluster as a cofactor.

Functionally, regulates the transcription of several operons and genes involved in the biogenesis of Fe-S clusters and Fe-S-containing proteins. This chain is HTH-type transcriptional regulator IscR, found in Vibrio atlanticus (strain LGP32) (Vibrio splendidus (strain Mel32)).